A 286-amino-acid polypeptide reads, in one-letter code: 4-diphosphocytidyl-2-C-methyl-D-erythritol kinase (286 aa).

Residue lysine 12 is part of the active site. 96–106 (PHGAGLGGGSA) serves as a coordination point for ATP. Aspartate 138 is an active-site residue.

Belongs to the GHMP kinase family. IspE subfamily.

The catalysed reaction is 4-CDP-2-C-methyl-D-erythritol + ATP = 4-CDP-2-C-methyl-D-erythritol 2-phosphate + ADP + H(+). The protein operates within isoprenoid biosynthesis; isopentenyl diphosphate biosynthesis via DXP pathway; isopentenyl diphosphate from 1-deoxy-D-xylulose 5-phosphate: step 3/6. Functionally, catalyzes the phosphorylation of the position 2 hydroxy group of 4-diphosphocytidyl-2C-methyl-D-erythritol. The chain is 4-diphosphocytidyl-2-C-methyl-D-erythritol kinase from Nitratidesulfovibrio vulgaris (strain ATCC 29579 / DSM 644 / CCUG 34227 / NCIMB 8303 / VKM B-1760 / Hildenborough) (Desulfovibrio vulgaris).